Consider the following 1208-residue polypeptide: MSERDFNTQSPKFKDENANSVISQSDFLGKSLKNNNDDYSDFRGSYLNDKSSFQTPLRNGSYQPKGSLEFTPLLQSSNKNSDKYNGSLGDKGSFDPNSYGLSAISKQATQEALSISQGNDSYDVSKLTDLSKNSEIDHTDGELPANAALTLREQEKVLEKVSRENFGLRIKIVCLEKRLESMAPEQIKEAVKDNVELHAERANLQLQLKRTESLLQKSEDKNFKLEEKVDYLSKVNDVEQSQNVKVFTERIRFLENALEKVQREKDSLSTEMEEDKSNKEVDYEYEIRQLQNRLDELSEELDVAQDLLTEKEDEIATLKRQIEEKENSSSAFENEENSSYVHLQEDYAILQAKCDEFADRIQVLTADLEKEKENQIMHESEASIGLTDSMQVHTLQEQLHKANEEIEFLHDQISRMNEEGKNFEDIMLQFRSLEEERDVLESKLQTLEDDNNSLRLMTSSLGNQIESLRTQNREIDEEKNHLRLLASKNSDKALAETNIRLQEVTKELETLRMKNSNDLNEIHDLREENEGLTLKIDSITKEKDRLINELEQRIKSYEVNVSELNGTIDEYRNKLKDKEETYNEVMNAFQYKDNDLRRFHESINKLQDREKELTSNLEKKNLVISSLRETVAMLEKERESIKKYLSGNAKDLDNTNLMEILNDKISVLQRQLTDVKDELDVSEEEREEAIVAGQKLSASFELMSNEKQALELKYSSLKNELINAQNLLDRREEELSELSKKLFEERKIRSGSNDDIEKNKEINVLNSELADKLAQIRHLESDKMELDKLVHHLNRGIEEANIEENAVKKRLCLLMGCDYSSVSILQIVSQIEHFVNQQIQTIRSLKQELRHDFVQFSGKKEQELSRSFEKFGLGTETKHDILAQRNRNVSEKMNDLENAAQKFFSSPDRKNGYLYPSEHTSKIEYLEKTIEDLKLALQDELKNRNLLMDDISSYNKQTTKLQEKIKWLERERSILIDELESYRSNQFNYQNNLVQDKNELEERLKEIQKELEVYNNHFMKQAELMTSNVTDESQLMLKTLREALQSKTNNIDHLSTILERNRKEYKSLLDDYNQLRARYKNLQSNTPQSTQSGQYESEIKGLSKLTKYLQSKCRREHSLRLDLAFSKKFILMQLTGYETCNKINLRMLQKIGISPDPDLSKKHIKLKSLIIVVCSIERMKRMKNEWLKQAQLKQSLQRAAAKAKTANY.

Residues 1–17 (MSERDFNTQSPKFKDEN) show a composition bias toward basic and acidic residues. The tract at residues 1–91 (MSERDFNTQS…DKYNGSLGDK (91 aa)) is disordered. Residues 48–64 (NDKSSFQTPLRNGSYQP) are compositionally biased toward polar residues. Coiled-coil stretches lie at residues 151-375 (LREQ…KENQ), 387-803 (TDSM…ANIE), 874-1091 (GTET…QSTQ), and 1177-1204 (ERMK…AKAK). Residue Ser906 is modified to Phosphoserine.

Interacts with ccq1.

The protein localises to the nucleus. It is found in the cytoplasm. It localises to the cytoskeleton. Its subcellular location is the microtubule organizing center. The protein resides in the spindle pole body. Its function is as follows. Spindle pole body component that binds calmodulin. Overexpression of pcp1 causes the formation of supernumerary SPB-like structures and disrupts both mitotic spindle assembly and chromosome segregation. The chain is Spindle pole body protein pcp1 (pcp1) from Schizosaccharomyces pombe (strain 972 / ATCC 24843) (Fission yeast).